A 273-amino-acid chain; its full sequence is Ribosomal protein L11 methyltransferase (273 aa).

Residues Thr-112, Gly-133, Asp-155, and Asn-203 each contribute to the S-adenosyl-L-methionine site.

The protein belongs to the methyltransferase superfamily. PrmA family.

It is found in the cytoplasm. It carries out the reaction L-lysyl-[protein] + 3 S-adenosyl-L-methionine = N(6),N(6),N(6)-trimethyl-L-lysyl-[protein] + 3 S-adenosyl-L-homocysteine + 3 H(+). In terms of biological role, methylates ribosomal protein L11. The sequence is that of Ribosomal protein L11 methyltransferase from Deinococcus radiodurans (strain ATCC 13939 / DSM 20539 / JCM 16871 / CCUG 27074 / LMG 4051 / NBRC 15346 / NCIMB 9279 / VKM B-1422 / R1).